A 297-amino-acid chain; its full sequence is MATLLSAQRAGWRDYLELTKPKVVVLMLITSLVGMFLATRAGVPWSVLLFGNLGIALCAGGAAAVNHVLDRRIDALMARTHKRPLAEGRVAPLPALLFALALALLGMALLLMFTNALTAWLTLASLLGYAVLYTGFLKRATPQNIVIGGLAGAAPPLLGWVAVSGHVSAEPLLLVLIIFAWTPPHFWALAIHRKEEYAKADIPMLPVTHGERYTKLHILLYTLILLAVTLLPYAIHMSGPLYLVCALALGLRFLQWAWVLYRGSRPHAAIGTFKYSIGYLFALFIALLVDHYLLLNL.

Transmembrane regions (helical) follow at residues Val23 to Val43, Trp45 to Val65, Leu93 to Phe113, Leu117 to Leu137, Ile145 to Gly165, Pro171 to Ile191, Leu216 to His236, Leu241 to Tyr261, and Ile277 to Leu297.

This sequence belongs to the UbiA prenyltransferase family. Protoheme IX farnesyltransferase subfamily.

It localises to the cell inner membrane. The catalysed reaction is heme b + (2E,6E)-farnesyl diphosphate + H2O = Fe(II)-heme o + diphosphate. It functions in the pathway porphyrin-containing compound metabolism; heme O biosynthesis; heme O from protoheme: step 1/1. Functionally, converts heme B (protoheme IX) to heme O by substitution of the vinyl group on carbon 2 of heme B porphyrin ring with a hydroxyethyl farnesyl side group. The polypeptide is Protoheme IX farnesyltransferase 1 (Pseudomonas putida (strain W619)).